We begin with the raw amino-acid sequence, 481 residues long: Molybdate-anion transporter (481 aa).

12 helical membrane-spanning segments follow: residues 1–21, 47–67, 80–100, 131–151, 180–200, 201–221, 276–296, 306–326, 341–361, 371–391, 403–423, and 443–463; these read MFVT…ALEI, LFLK…PYLY, IAIL…VAGW, FMLI…TTTF, WNYG…EWLG, LGPV…AWFV, VMLL…FVFL, PPLG…STLF, LLCL…FSTV, LLAF…VSFL, AVLA…LLAL, and FAGC…LFTV.

It belongs to the major facilitator superfamily.

Its subcellular location is the cell membrane. In terms of biological role, mediates high-affinity intracellular uptake of the rare oligo-element molybdenum. The sequence is that of Molybdate-anion transporter (mfsd5) from Danio rerio (Zebrafish).